The primary structure comprises 1364 residues: Chromatin-remodeling ATPase INO80 (1364 aa).

2 stretches are compositionally biased toward polar residues: residues M1–V18 and G66–I84. 2 disordered regions span residues M1–I84 and L213–V293. A compositionally biased stretch (basic and acidic residues) spans L213 to A227. Basic residues predominate over residues P243–P255. Positions I335–T460 constitute a DBINO domain. The region spanning A579 to S751 is the Helicase ATP-binding domain. Residue D592–T599 coordinates ATP. Residues D702–Q705 carry the DEAQ box motif. The region spanning K1146–S1302 is the Helicase C-terminal domain. The tract at residues A1321–L1364 is disordered. The segment covering E1330–E1353 has biased composition (basic and acidic residues).

The protein belongs to the SNF2/RAD54 helicase family. Component of the INO80 chromatin-remodeling complex.

It is found in the nucleus. The catalysed reaction is ATP + H2O = ADP + phosphate + H(+). Functionally, ATPase component of the INO80 complex which remodels chromatin by shifting nucleosomes and is involved in DNA repair. The chain is Chromatin-remodeling ATPase INO80 (INO80) from Debaryomyces hansenii (strain ATCC 36239 / CBS 767 / BCRC 21394 / JCM 1990 / NBRC 0083 / IGC 2968) (Yeast).